We begin with the raw amino-acid sequence, 480 residues long: O-acyltransferase ausP (480 aa).

Catalysis depends on proton acceptor residues H180 and D412.

The protein belongs to the plant acyltransferase family. As to quaternary structure, monomer.

The protein operates within secondary metabolite biosynthesis; terpenoid biosynthesis. Its function is as follows. O-acyltransferase; part of the gene cluster that mediates the biosynthesis of calidodehydroaustin, a fungal meroterpenoid. The first step of the pathway is the synthesis of 3,5-dimethylorsellinic acid by the polyketide synthase ausA. 3,5-dimethylorsellinic acid is then prenylated by the polyprenyl transferase ausN. Further epoxidation by the FAD-dependent monooxygenase ausM and cyclization by the probable terpene cyclase ausL lead to the formation of protoaustinoid A. Protoaustinoid A is then oxidized to spiro-lactone preaustinoid A3 by the combined action of the FAD-binding monooxygenases ausB and ausC, and the dioxygenase ausE. Acid-catalyzed keto-rearrangement and ring contraction of the tetraketide portion of preaustinoid A3 by ausJ lead to the formation of preaustinoid A4. The aldo-keto reductase ausK, with the help of ausH, is involved in the next step by transforming preaustinoid A4 into isoaustinone which is in turn hydroxylated by the P450 monooxygenase ausI to form austinolide. The cytochrome P450 monooxygenase ausG modifies austinolide to austinol. Austinol is further acetylated to austin by the O-acetyltransferase ausP, which spontaneously changes to dehydroaustin. The cytochrome P450 monooxygenase ausR then converts dehydroaustin is into 7-dehydrodehydroaustin. The hydroxylation catalyzed by ausR permits the O-acetyltransferase ausQ to add an additional acetyl group to the molecule, leading to the formation of acetoxydehydroaustin. The short chain dehydrogenase ausT catalyzes the reduction of the double bond present between carbon atoms 1 and 2 to convert 7-dehydrodehydroaustin into 1,2-dihydro-7-hydroxydehydroaustin. AusQ catalyzes not only an acetylation reaction but also the addition of the PKS ausV diketide product to 1,2-dihydro-7-hydroxydehydroaustin, forming precalidodehydroaustin. Finally, the iron/alpha-ketoglutarate-dependent dioxygenase converts precalidodehydroaustin into calidodehydroaustin. This chain is O-acyltransferase ausP, found in Aspergillus calidoustus.